Consider the following 637-residue polypeptide: tRNA uridine 5-carboxymethylaminomethyl modification enzyme MnmG (637 aa).

Residues 15–20, Ile127, and Ser182 each bind FAD; that span reads GAGHAG. NAD(+) is bound at residue 276–290; it reads GPRYCPSIEDKIVRF. Gln373 lines the FAD pocket.

It belongs to the MnmG family. In terms of assembly, homodimer. Heterotetramer of two MnmE and two MnmG subunits. Requires FAD as cofactor.

Its subcellular location is the cytoplasm. Its function is as follows. NAD-binding protein involved in the addition of a carboxymethylaminomethyl (cmnm) group at the wobble position (U34) of certain tRNAs, forming tRNA-cmnm(5)s(2)U34. The sequence is that of tRNA uridine 5-carboxymethylaminomethyl modification enzyme MnmG from Streptococcus pneumoniae (strain ATCC BAA-255 / R6).